The primary structure comprises 350 residues: Biotin synthase (350 aa).

The Radical SAM core domain maps to 41 to 268 (NEVQISRLLS…LSRVRLSAGR (228 aa)). 3 residues coordinate [4Fe-4S] cluster: C56, C60, and C63. [2Fe-2S] cluster is bound by residues C100, C131, C191, and R263.

The protein belongs to the radical SAM superfamily. Biotin synthase family. In terms of assembly, homodimer. It depends on [4Fe-4S] cluster as a cofactor. Requires [2Fe-2S] cluster as cofactor.

It carries out the reaction (4R,5S)-dethiobiotin + (sulfur carrier)-SH + 2 reduced [2Fe-2S]-[ferredoxin] + 2 S-adenosyl-L-methionine = (sulfur carrier)-H + biotin + 2 5'-deoxyadenosine + 2 L-methionine + 2 oxidized [2Fe-2S]-[ferredoxin]. It functions in the pathway cofactor biosynthesis; biotin biosynthesis; biotin from 7,8-diaminononanoate: step 2/2. Functionally, catalyzes the conversion of dethiobiotin (DTB) to biotin by the insertion of a sulfur atom into dethiobiotin via a radical-based mechanism. This is Biotin synthase from Shewanella baltica (strain OS223).